The following is a 442-amino-acid chain: Endothelin receptor type B (442 aa).

A signal peptide spans 1-26 (MQPPPSLCGRALVALVLACGLSRIWG). Topologically, residues 27-101 (EERGFPPDRA…GSIEIKETFK (75 aa)) are extracellular. An N-linked (GlcNAc...) asparagine glycan is attached at asparagine 59. Positions 69–88 (AEVPKGDRTAGSPPRTISPP) are disordered. Residues 102–126 (YINTVVSCLVFVLGIIGNSTLLRII) traverse the membrane as a helical segment. Residues 127-137 (YKNKCMRNGPN) are Cytoplasmic-facing. Residues 138-163 (ILIASLALGDLLHIIIDIPITVYKLL) form a helical membrane-spanning segment. At 164–175 (AEDWPFGVEMCK) the chain is on the extracellular side. Cysteine 174 and cysteine 255 form a disulfide bridge. The chain crosses the membrane as a helical span at residues 176–197 (LVPFIQKASVGITVLSLCALSI). The Cytoplasmic portion of the chain corresponds to 198-218 (DRYRAVASWSRIKGIGVPKWT). Residues 219–243 (AVEIVLIWVVSVVLAVPEAVGFDMI) traverse the membrane as a helical segment. The Extracellular portion of the chain corresponds to 244-271 (TIDYKGRYLRICLLHPTQKTAFMQFYKT). The chain crosses the membrane as a helical span at residues 272–296 (AKDWWLFSFYFCLPLAITAFFYTLM). Over 297–324 (TCEMLRKKSGMQIALNDHLKQRREVAKT) the chain is Cytoplasmic. Serine 305 carries the post-translational modification Phosphoserine. The helical transmembrane segment at 325 to 350 (VFCLVLVFALCWLPLHLSRILKLTIY) threads the bilayer. Residues 351–362 (DQNDPNRCELLS) are Extracellular-facing. The helical transmembrane segment at 363–389 (FLLVLDYIGINMASLNSCINPIALYLV) threads the bilayer. The Cytoplasmic segment spans residues 390–442 (SKRFKNCFKSCLCCWCQSFEEKQSLEEKQSCLKFKANDHGYDNFRSSNKYSSS). 3 S-palmitoyl cysteine lipidation sites follow: cysteine 402, cysteine 403, and cysteine 405. Position 419 is a phosphoserine (serine 419). Tyrosine 439 is modified (phosphotyrosine). Residues serine 440, serine 441, and serine 442 each carry the phosphoserine modification.

This sequence belongs to the G-protein coupled receptor 1 family. Endothelin receptor subfamily. EDNRB sub-subfamily.

The protein localises to the cell membrane. Its function is as follows. Non-specific receptor for endothelin 1, 2, and 3. Mediates its action by association with G proteins that activate a phosphatidylinositol-calcium second messenger system. The sequence is that of Endothelin receptor type B (EDNRB) from Canis lupus familiaris (Dog).